A 325-amino-acid chain; its full sequence is Diacylglycerol acyltransferase/mycolyltransferase Ag85B (325 aa).

Positions 1–38 (MTFIDKIRGHWARRMTVAAVAALLLPGLVGVVGGSATA) are cleaved as a signal peptide. Substrate is bound at residue 82–83 (LR). The tract at residues 98–108 (FEMFLDSGLSV) is fibronectin-binding. C127 and C132 are joined by a disulfide. S166 provides a ligand contact to substrate. Residue S166 is the Nucleophile of the active site. The active site involves E272. Substrate is bound by residues 274–277 (LTIR) and 304–306 (HNW). H304 is a catalytic residue.

The protein belongs to the mycobacterial A85 antigen family.

It is found in the secreted. It catalyses the reaction 2 alpha,alpha'-trehalose 6-mycolate = alpha,alpha'-trehalose 6,6'-bismycolate + alpha,alpha-trehalose. The catalysed reaction is an acyl-CoA + a 1,2-diacyl-sn-glycerol = a triacyl-sn-glycerol + CoA. Functionally, the antigen 85 proteins (FbpA, FbpB, FbpC) are responsible for the high affinity of mycobacteria for fibronectin, a large adhesive glycoprotein. They also help to maintain the integrity of the cell wall by catalyzing the transfer of mycolic acids to cell wall arabinogalactan and through the synthesis of alpha,alpha-trehalose dimycolate (TDM, cord factor). They catalyze the transfer of a mycoloyl residue from one molecule of alpha,alpha-trehalose monomycolate (TMM) to another TMM, leading to the formation of TDM. This chain is Diacylglycerol acyltransferase/mycolyltransferase Ag85B (fbpB), found in Mycolicibacterium smegmatis (strain ATCC 700084 / mc(2)155) (Mycobacterium smegmatis).